We begin with the raw amino-acid sequence, 507 residues long: DNA ligase B (507 aa).

The interval 1-172 (MLLHDVAITS…AAAAGLSGAA (172 aa)) is not required for adenylyltransferase activity, required for nick joining. Glu209 lines the ATP pocket. The active-site N6-AMP-lysine intermediate is the Lys211. Positions 216, 231, 260, 300, 372, and 378 each coordinate ATP.

The protein belongs to the ATP-dependent DNA ligase family. Monomer. Requires Mg(2+) as cofactor.

The enzyme catalyses ATP + (deoxyribonucleotide)n-3'-hydroxyl + 5'-phospho-(deoxyribonucleotide)m = (deoxyribonucleotide)n+m + AMP + diphosphate.. In terms of biological role, DNA ligase that seals nicks in double-stranded DNA during DNA replication, DNA recombination and DNA repair. This is DNA ligase B (ligB) from Mycobacterium tuberculosis (strain ATCC 25618 / H37Rv).